We begin with the raw amino-acid sequence, 139 residues long: Ribonuclease P protein component (139 aa).

This sequence belongs to the RnpA family. As to quaternary structure, consists of a catalytic RNA component (M1 or rnpB) and a protein subunit.

It catalyses the reaction Endonucleolytic cleavage of RNA, removing 5'-extranucleotides from tRNA precursor.. Functionally, RNaseP catalyzes the removal of the 5'-leader sequence from pre-tRNA to produce the mature 5'-terminus. It can also cleave other RNA substrates such as 4.5S RNA. The protein component plays an auxiliary but essential role in vivo by binding to the 5'-leader sequence and broadening the substrate specificity of the ribozyme. This is Ribonuclease P protein component from Paraburkholderia xenovorans (strain LB400).